Here is a 332-residue protein sequence, read N- to C-terminus: MQLETQDALYVALELVIAALAVAGNVLVCAAVGASSALQTPTNYFLVSLATADVAVGLFAIPFAITISLGFCTDFHSCLFLACFVLVLTQSSIFSLLAVAVDRYLAIRVPLRYKGLVTGTRARGIIAVLWVLAFGIGLTPFLGWNSKDRATSNCTEPGDGITNKSCCPVKCLFENVVPMSYMVYFNFFGCVLPPLLIMMVIYIKIFMVACKQLQHMELMEHSRTTLQREIHAAKSLAMIVGIFALCWLPVHAINCITLFHPALAKDKPKWVMNVAILLSHANSVVNPIVYAYRNRDFRYSFHRIISRYVLCQTDTKGGSGQAGGQSTFSLSL.

Topologically, residues 1–8 (MQLETQDA) are extracellular. Residues 9 to 33 (LYVALELVIAALAVAGNVLVCAAVG) traverse the membrane as a helical segment. Over 34-43 (ASSALQTPTN) the chain is Cytoplasmic. Residues 44–67 (YFLVSLATADVAVGLFAIPFAITI) traverse the membrane as a helical segment. The Extracellular portion of the chain corresponds to 68–78 (SLGFCTDFHSC). Cysteines 78 and 171 form a disulfide. The chain crosses the membrane as a helical span at residues 79–101 (LFLACFVLVLTQSSIFSLLAVAV). The Cytoplasmic portion of the chain corresponds to 102-121 (DRYLAIRVPLRYKGLVTGTR). The chain crosses the membrane as a helical span at residues 122–144 (ARGIIAVLWVLAFGIGLTPFLGW). At 145–178 (NSKDRATSNCTEPGDGITNKSCCPVKCLFENVVP) the chain is on the extracellular side. N153 and N163 each carry an N-linked (GlcNAc...) asparagine glycan. E174 is an adenosine binding site. A helical transmembrane segment spans residues 179–203 (MSYMVYFNFFGCVLPPLLIMMVIYI). Residues 204-235 (KIFMVACKQLQHMELMEHSRTTLQREIHAAKS) are Cytoplasmic-facing. Residues 236–259 (LAMIVGIFALCWLPVHAINCITLF) traverse the membrane as a helical segment. N254 is an adenosine binding site. Over 260–267 (HPALAKDK) the chain is Extracellular. Residues 268–291 (PKWVMNVAILLSHANSVVNPIVYA) form a helical membrane-spanning segment. Residues S279 and H280 each coordinate adenosine. The Cytoplasmic segment spans residues 292–332 (YRNRDFRYSFHRIISRYVLCQTDTKGGSGQAGGQSTFSLSL). C311 carries the S-palmitoyl cysteine lipid modification.

This sequence belongs to the G-protein coupled receptor 1 family.

The protein localises to the cell membrane. Its function is as follows. Receptor for adenosine. The activity of this receptor is mediated by G proteins which activate adenylyl cyclase. The polypeptide is Adenosine receptor A2b (Adora2b) (Rattus norvegicus (Rat)).